The primary structure comprises 350 residues: N-acetyl-gamma-glutamyl-phosphate reductase (350 aa).

The active site involves cysteine 153.

This sequence belongs to the NAGSA dehydrogenase family. Type 1 subfamily.

Its subcellular location is the cytoplasm. The enzyme catalyses N-acetyl-L-glutamate 5-semialdehyde + phosphate + NADP(+) = N-acetyl-L-glutamyl 5-phosphate + NADPH + H(+). The protein operates within amino-acid biosynthesis; L-arginine biosynthesis; N(2)-acetyl-L-ornithine from L-glutamate: step 3/4. Functionally, catalyzes the NADPH-dependent reduction of N-acetyl-5-glutamyl phosphate to yield N-acetyl-L-glutamate 5-semialdehyde. The sequence is that of N-acetyl-gamma-glutamyl-phosphate reductase from Gloeobacter violaceus (strain ATCC 29082 / PCC 7421).